The chain runs to 318 residues: Mitochondrial fission regulator 1 (318 aa).

2 disordered regions span residues 101-121 (RPLR…AQQS) and 154-193 (QEQS…PSMQ). Residues 124–157 (VINDEAIQKISVLETELAKLRAQIAQIVQAQEQS) are a coiled coil. Positions 154–164 (QEQSAQSTAPA) are enriched in low complexity. Residues 165-189 (PGGPPVPPPMVPVPPPPPPPPPCPT) show a composition bias toward pro residues. The interval 168 to 296 (PPVPPPMVPV…TFTFTAFENK (129 aa)) is necessary and sufficient to promote mitochondrial fission.

It belongs to the MTFR1 family.

The protein localises to the mitochondrion. In terms of biological role, may play a role in mitochondrial aerobic respiration. May also regulate mitochondrial organization and fission. This chain is Mitochondrial fission regulator 1 (mtfr1), found in Danio rerio (Zebrafish).